The chain runs to 147 residues: Insertion element IS402 uncharacterized 16.2 kDa protein (147 aa).

Positions 106–147 (DSSSIRAVGAGQKLGQTPPIARDPVPSTTSSPTPTVRRSPRS) are disordered. The span at 129–147 (PVPSTTSSPTPTVRRSPRS) shows a compositional bias: low complexity.

Belongs to the transposase 6 family.

The protein is Insertion element IS402 uncharacterized 16.2 kDa protein of Burkholderia cepacia (Pseudomonas cepacia).